We begin with the raw amino-acid sequence, 480 residues long: Vinorine hydroxylase (480 aa).

The chain crosses the membrane as a helical span at residues Leu3–Trp23. Cys418 contributes to the heme binding site.

The protein belongs to the cytochrome P450 family. It depends on heme as a cofactor. In terms of tissue distribution, mainly expressed in roots and, to a lesser extent, in leaves.

The protein resides in the membrane. It catalyses the reaction vinorine + reduced [NADPH--hemoprotein reductase] + O2 = vomilenine + oxidized [NADPH--hemoprotein reductase] + H2O + H(+). The catalysed reaction is vomilenine = perakine. The protein operates within alkaloid biosynthesis; ajmaline biosynthesis. Its function is as follows. A cytochrome P450 monooxygenase involved in the biosynthesis of ajmaline-type monoterpenoid indole alkaloids (MIAs) natural products, important plant-derived pharmaceuticals used in the therapy of heart disorders. Catalyzes the hydroxylation of vinorine to vomilenine, an intermediate chemical in the biosynthesis of ajmaline. Supports also vomilenine isomerization to perakine. In Rauvolfia serpentina (Serpentine wood), this protein is Vinorine hydroxylase.